The primary structure comprises 310 residues: Small ribosomal subunit protein uS2 (310 aa).

2 disordered regions span residues 213-240 (EEQAALARQQEEANAGTTAGFSEWGGAA) and 271-310 (WDSVAPGATDDWGAEPAAPSSDWGTAVTMQEQAKPSTDWA). A compositionally biased stretch (low complexity) spans 216–227 (AALARQQEEANA). The segment covering 297 to 310 (VTMQEQAKPSTDWA) has biased composition (polar residues).

This sequence belongs to the universal ribosomal protein uS2 family. In terms of assembly, component of the small ribosomal subunit. Mature ribosomes consist of a small (40S) and a large (60S) subunit. The 40S subunit contains about 33 different proteins and 1 molecule of RNA (18S). The 60S subunit contains about 49 different proteins and 3 molecules of RNA (28S, 5.8S and 5S). Interacts with ribosomal protein S21.

Its subcellular location is the cytoplasm. Required for the assembly and/or stability of the 40S ribosomal subunit. Required for the processing of the 20S rRNA-precursor to mature 18S rRNA in a late step of the maturation of 40S ribosomal subunits. In Nematostella vectensis (Starlet sea anemone), this protein is Small ribosomal subunit protein uS2.